A 240-amino-acid chain; its full sequence is Large ribosomal subunit protein bL25 (240 aa).

Disordered regions lie at residues 1-23 (MATV…ARAE) and 207-240 (PAAA…AKKK).

The protein belongs to the bacterial ribosomal protein bL25 family. CTC subfamily. In terms of assembly, part of the 50S ribosomal subunit; part of the 5S rRNA/L5/L18/L25 subcomplex. Contacts the 5S rRNA. Binds to the 5S rRNA independently of L5 and L18.

This is one of the proteins that binds to the 5S RNA in the ribosome where it forms part of the central protuberance. The protein is Large ribosomal subunit protein bL25 of Rhodopseudomonas palustris (strain BisB18).